Here is a 381-residue protein sequence, read N- to C-terminus: MGGLRFGFVDALVHSRLPPTLPARSSMAAATVMGADSYWVGDHLNALVPRSIATSEYLGIAAKFVPKIDANYEPWTMLGNLAFGLPSRLRLGVCVTDAGRRNPAVTAQAAATLHLLTRGRAILGIGVGEREGNEPYGVEWTKPVARFEEALATIRALWNSNGELISRESPYFPLHNALFDLPPYRGKWPEIWVAAHGPRMLRATGRYADAWIPIVVVRPSDYSRALEAVRSAASDAGRDPMSITPAAVRGIITGRNRDDVEEALESVVVKMTALGVPGEAWARHGVEHPMGADFSGVQDIIPQTMDKQTVLSYAAKVPAALMKEVVFSGTPDEVIDQVAEWRDHGLRYVVLINGSLVNPSLRKTVTAVLPHAKVLRGLKKL.

The protein belongs to the mer family. Phthiodiolone/phenolphthiodiolone dimycocerosates ketoreductase subfamily.

Its function is as follows. Catalyzes the reduction of the keto moiety of phthiodiolone dimycocerosates (DIM B) and glycosylated phenolphthiodiolone dimycocerosates to form the intermediate compounds phthiotriol and glycosylated phenolphthiotriol dimycocerosates during phthiocerol dimycocerosates (DIM A) and glycosylated phenolphthiocerol dimycocerosates (PGL) biosynthesis. This Mycobacterium bovis (strain ATCC BAA-935 / AF2122/97) protein is Phthiodiolone/phenolphthiodiolone dimycocerosates ketoreductase.